The primary structure comprises 393 residues: MQQTKKLTHSDITIAVMSGPFLQRGEPALVSKWYRTKMALACGVDLVVELPYAFSTQKAETFANGAISILNALHVSEICFGSEDGQIENFYNTVSAQKNEEETFNRLVKQFMNAGNSYAKATSEAFLHILSSEKNIDMSQPNNILGFQYIKAILMQNSSMQAQTIKRFASHYHDETFNDQHIASATSIRKQLFSENSSFTEIESFIPKATASLLASYKQNYGTLHNWEQYFSFFKYKLMTMSPEDLRHIYEIEEGLEHRILSKIQTSSSFHLFMEALKTKRYTWTRLQRACTHILTNTTKEEIHCANIEQHAPYIRLLGMSQKGQTYLSKNKKKIELPILTHTKTFDHPTLHIERKANSVYFSIMKEPLRTQLLKRDATHHPIRYDETTAKFL.

3 residues coordinate ATP: Gly81, Asn142, and Arg167.

It belongs to the TmcAL family.

Its subcellular location is the cytoplasm. The enzyme catalyses cytidine(34) in elongator tRNA(Met) + acetate + ATP = N(4)-acetylcytidine(34) in elongator tRNA(Met) + AMP + diphosphate. Catalyzes the formation of N(4)-acetylcytidine (ac(4)C) at the wobble position of elongator tRNA(Met), using acetate and ATP as substrates. First activates an acetate ion to form acetyladenylate (Ac-AMP) and then transfers the acetyl group to tRNA to form ac(4)C34. This is tRNA(Met) cytidine acetate ligase from Bacillus thuringiensis (strain Al Hakam).